A 179-amino-acid chain; its full sequence is Large ribosomal subunit protein uL5 (179 aa).

This sequence belongs to the universal ribosomal protein uL5 family. As to quaternary structure, part of the 50S ribosomal subunit; part of the 5S rRNA/L5/L18/L25 subcomplex. Contacts the 5S rRNA and the P site tRNA. Forms a bridge to the 30S subunit in the 70S ribosome.

Functionally, this is one of the proteins that bind and probably mediate the attachment of the 5S RNA into the large ribosomal subunit, where it forms part of the central protuberance. In the 70S ribosome it contacts protein S13 of the 30S subunit (bridge B1b), connecting the 2 subunits; this bridge is implicated in subunit movement. Contacts the P site tRNA; the 5S rRNA and some of its associated proteins might help stabilize positioning of ribosome-bound tRNAs. This chain is Large ribosomal subunit protein uL5, found in Shewanella baltica (strain OS223).